We begin with the raw amino-acid sequence, 170 residues long: Putative phosphoesterase OB1230 (170 aa).

Residue histidine 34 is the Proton donor of the active site. 2 consecutive short sequence motifs (HXTX) follow at residues 34-37 (HLTL) and 115-118 (HITI). The active-site Proton acceptor is histidine 115.

This sequence belongs to the 2H phosphoesterase superfamily. YjcG family.

This Oceanobacillus iheyensis (strain DSM 14371 / CIP 107618 / JCM 11309 / KCTC 3954 / HTE831) protein is Putative phosphoesterase OB1230.